We begin with the raw amino-acid sequence, 435 residues long: Methylenetetrahydrofolate--tRNA-(uracil-5-)-methyltransferase TrmFO (435 aa).

9–14 is a binding site for FAD; the sequence is GAGLAG.

The protein belongs to the MnmG family. TrmFO subfamily. FAD serves as cofactor.

The protein localises to the cytoplasm. The catalysed reaction is uridine(54) in tRNA + (6R)-5,10-methylene-5,6,7,8-tetrahydrofolate + NADH + H(+) = 5-methyluridine(54) in tRNA + (6S)-5,6,7,8-tetrahydrofolate + NAD(+). It catalyses the reaction uridine(54) in tRNA + (6R)-5,10-methylene-5,6,7,8-tetrahydrofolate + NADPH + H(+) = 5-methyluridine(54) in tRNA + (6S)-5,6,7,8-tetrahydrofolate + NADP(+). Catalyzes the folate-dependent formation of 5-methyl-uridine at position 54 (M-5-U54) in all tRNAs. This chain is Methylenetetrahydrofolate--tRNA-(uracil-5-)-methyltransferase TrmFO, found in Staphylococcus aureus (strain MRSA252).